The sequence spans 245 residues: Type I iodothyronine deiodinase (245 aa).

The Extracellular portion of the chain corresponds to 1-9 (LSIRVLLHK). A helical; Signal-anchor for type III membrane protein membrane pass occupies residues 10 to 30 (LLILLQVTLSVVVGKTMMILF). At 31 to 245 (PDTTKRYILK…EIRAVLEKLK (215 aa)) the chain is on the cytoplasmic side. The active site involves selenocysteine 123. Selenocysteine 123 is a non-standard amino acid (selenocysteine).

The protein belongs to the iodothyronine deiodinase family. In terms of assembly, predominantly monomer. Can form homodimers but homodimerization is not essential for enzyme activity.

The protein resides in the cell membrane. It is found in the endoplasmic reticulum membrane. Its subcellular location is the basolateral cell membrane. The enzyme catalyses 3,3',5-triiodo-L-thyronine + iodide + A + H(+) = L-thyroxine + AH2. It carries out the reaction 3,3',5'-triiodo-L-thyronine + iodide + A + H(+) = L-thyroxine + AH2. The catalysed reaction is 3,3'-diiodo-L-thyronine + iodide + A + H(+) = 3,3',5'-triiodo-L-thyronine + AH2. It catalyses the reaction 3,3'-diiodo-L-thyronine + iodide + A + H(+) = 3,3',5-triiodo-L-thyronine + AH2. The enzyme catalyses 3'-iodo-L-thyronine + iodide + A + H(+) = 3',5'-diiodo-L-thyronine + AH2. It carries out the reaction 3-iodo-L-thyronine + iodide + A + H(+) = 3,5-diiodo-L-thyronine + AH2. The catalysed reaction is 3-iodo-L-thyronine + iodide + A + H(+) = 3,3'-diiodo-L-thyronine + AH2. It catalyses the reaction 3,3'-diiodothyronamine + iodide + A + H(+) = 3,3',5'-triiodothyronamine + AH2. The enzyme catalyses 3'-iodothyronamine + iodide + A + H(+) = 3',5'-diiodothyronamine + AH2. It carries out the reaction 3-iodothyronamine + iodide + A + H(+) = 3,3'-diiodothyronamine + AH2. The catalysed reaction is 3,3'-diiodothyronamine + iodide + A + H(+) = 3,3',5-triiodothyronamine + AH2. It catalyses the reaction 3-iodothyronamine + iodide + A + H(+) = 3,5-diiodothyronamine + AH2. The enzyme catalyses 3,3'-diiodo-L-thyronine sulfate + iodide + A + H(+) = 3,3',5'-triiodo-L-thyronine sulfate + AH2. It carries out the reaction 3,3',5'-triiodo-L-thyronine sulfate + iodide + A + H(+) = L-thyroxine sulfate + AH2. The catalysed reaction is 3,3'-diiodo-L-thyronine sulfate + iodide + A + H(+) = 3,3',5-triiodo-L-thyronine sulfate + AH2. Plays a crucial role in the metabolism of thyroid hormones (TH) and has specific roles in TH activation and inactivation by deiodination. Catalyzes the deiodiantion of L-thyroxine (T4) to 3,5,3'-triiodothyronine (T3) and 3,3',5'-triiodothyronine (rT3) to 3,3'-diiodothyronine (3,3'-T2) via outer-ring deiodination (ORD). Catalyzes the deiodiantion of T4 to rT3, T3 to 3,3'-T2, 3,5-diiodothyronine (3,5-T2) to 3-monoiodothyronine (3-T1) and 3,3'-T2 to 3-T1 via inner-ring deiodination (IRD). Catalyzes the deiodiantion of 3',5'-diiodothyronine (3',5'-T2) to 3'-monoiodothyronine (3'-T1) via ORD. Catalyzes the phenolic ring deiodinations of 3,3',5'-triiodothyronamine, 3',5'-diiodothyronamine and 3,3'-diiodothyronamine as well as tyrosyl ring deiodinations of 3,5,3'-triiodothyronamine and 3,5-diiodothyronamine. Catalyzes the deiodination of L-thyroxine sulfate and 3,3',5-triiodo-L-thyronine sulfate via IRD and of 3,3',5'-triiodo-L-thyronine sulfate via ORD. The protein is Type I iodothyronine deiodinase (DIO1) of Gallus gallus (Chicken).